The sequence spans 209 residues: V-type ATP synthase subunit D (209 aa).

The protein belongs to the V-ATPase D subunit family.

Functionally, produces ATP from ADP in the presence of a proton gradient across the membrane. The chain is V-type ATP synthase subunit D from Anaeromyxobacter sp. (strain K).